The chain runs to 274 residues: Large ribosomal subunit protein uL2 (274 aa).

Residues 223–274 (VAMNPVDHPHGGGEGRTGEGRHAVDPWGNLTKGYRTRNNKRTQSMIVSRRKK) form a disordered region. Residues 229–246 (DHPHGGGEGRTGEGRHAV) show a composition bias toward basic and acidic residues.

It belongs to the universal ribosomal protein uL2 family. In terms of assembly, part of the 50S ribosomal subunit. Forms a bridge to the 30S subunit in the 70S ribosome.

In terms of biological role, one of the primary rRNA binding proteins. Required for association of the 30S and 50S subunits to form the 70S ribosome, for tRNA binding and peptide bond formation. It has been suggested to have peptidyltransferase activity; this is somewhat controversial. Makes several contacts with the 16S rRNA in the 70S ribosome. This is Large ribosomal subunit protein uL2 from Verminephrobacter eiseniae (strain EF01-2).